Consider the following 73-residue polypeptide: Translation initiation factor IF-1 (73 aa).

The region spanning 1–73 (MAKKDGVIEI…TRGRIVYRYK (73 aa)) is the S1-like domain.

Belongs to the IF-1 family. In terms of assembly, component of the 30S ribosomal translation pre-initiation complex which assembles on the 30S ribosome in the order IF-2 and IF-3, IF-1 and N-formylmethionyl-tRNA(fMet); mRNA recruitment can occur at any time during PIC assembly.

The protein resides in the cytoplasm. One of the essential components for the initiation of protein synthesis. Stabilizes the binding of IF-2 and IF-3 on the 30S subunit to which N-formylmethionyl-tRNA(fMet) subsequently binds. Helps modulate mRNA selection, yielding the 30S pre-initiation complex (PIC). Upon addition of the 50S ribosomal subunit IF-1, IF-2 and IF-3 are released leaving the mature 70S translation initiation complex. The chain is Translation initiation factor IF-1 from Clavibacter michiganensis subsp. michiganensis (strain NCPPB 382).